Here is a 336-residue protein sequence, read N- to C-terminus: Ferredoxin--NADP reductase (336 aa).

Positions 37, 45, 50, 90, 124, 286, and 327 each coordinate FAD.

Belongs to the ferredoxin--NADP reductase type 2 family. As to quaternary structure, homodimer. Requires FAD as cofactor.

The catalysed reaction is 2 reduced [2Fe-2S]-[ferredoxin] + NADP(+) + H(+) = 2 oxidized [2Fe-2S]-[ferredoxin] + NADPH. The polypeptide is Ferredoxin--NADP reductase (Enterococcus faecalis (strain ATCC 700802 / V583)).